Reading from the N-terminus, the 437-residue chain is Vasoactive intestinal polypeptide receptor 2 (437 aa).

A signal peptide spans 1-22 (MRASVVLTCYCWLLVRVSSIHP). The Extracellular segment spans residues 23-123 (ECRFHLEIQE…EDESKITFYI (101 aa)). Disulfide bonds link C37–C60, C51–C92, and C74–C108. N-linked (GlcNAc...) asparagine glycosylation is found at N57, N87, and N91. The helical transmembrane segment at 124–149 (LVKAIYTLGYSVSLMSLTTGSIIICL) threads the bilayer. Topologically, residues 150 to 157 (FRKLHCTR) are cytoplasmic. The helical transmembrane segment at 158 to 179 (NYIHLNLFLSFMLRAISVLVKD) threads the bilayer. Residues 180–202 (SVLYSSSGTLRCHDQPGSWVGCK) are Extracellular-facing. A disulfide bond links C201 and C270. A helical membrane pass occupies residues 203–227 (LSLVFFQYCIMANFYWLLVEGLYLH). At 228-238 (TLLVAILPPSR) the chain is on the cytoplasmic side. A helical transmembrane segment spans residues 239 to 260 (CFLAYLLIGWGIPSVCIGAWIA). Over 261 to 279 (TRLSLEDTGCWDTNDHSIP) the chain is Extracellular. A helical membrane pass occupies residues 280-303 (WWVIRMPILISIVVNFALFISIVR). The Cytoplasmic portion of the chain corresponds to 304–324 (ILLQKLTSPDVGGNDQSQYKR). The helical transmembrane segment at 325–345 (LAKSTLLLIPLFGVHYMVFAA) threads the bilayer. The Extracellular portion of the chain corresponds to 346 to 353 (FPIGISST). Residues 354-377 (YQILFELCVGSFQGLVVAVLYCFL) traverse the membrane as a helical segment. The Cytoplasmic portion of the chain corresponds to 378 to 437 (NSEVQCELKRRWRGLCLTQPGSRDYRLHSWSMSRNGSESALQIHRGSRTQSFLQSETSVI).

It belongs to the G-protein coupled receptor 2 family. In terms of assembly, interacts with ADCYAP1/PACAP (via N-terminal extracellular domain); activated by PACAP27 and CAPAC38 neuropeptides. Interacts with VIP; the interaction results in VIPR1 activation. Mainly in the thalamus, hippocampus and in the suprachiasmatic nucleus.

It is found in the cell membrane. G protein-coupled receptor activated by the neuropeptides vasoactive intestinal peptide (VIP) and pituitary adenylate cyclase-activating polypeptide (ADCYAP1/PACAP). Binds VIP and both PACAP27 and PACAP38 bioactive peptides with the order of ligand affinity of VIP = PACAP38 &gt; PACAP27. Ligand binding causes a conformation change that triggers signaling via guanine nucleotide-binding proteins (G proteins) and modulates the activity of downstream effectors. Activates cAMP-dependent pathway. May be coupled to phospholipase C. In Rattus norvegicus (Rat), this protein is Vasoactive intestinal polypeptide receptor 2.